Reading from the N-terminus, the 186-residue chain is Peptide deformylase (186 aa).

Fe cation contacts are provided by Cys113 and His156. The active site involves Glu157. Residue His160 coordinates Fe cation.

It belongs to the polypeptide deformylase family. It depends on Fe(2+) as a cofactor.

The catalysed reaction is N-terminal N-formyl-L-methionyl-[peptide] + H2O = N-terminal L-methionyl-[peptide] + formate. Its function is as follows. Removes the formyl group from the N-terminal Met of newly synthesized proteins. Requires at least a dipeptide for an efficient rate of reaction. N-terminal L-methionine is a prerequisite for activity but the enzyme has broad specificity at other positions. The protein is Peptide deformylase of Lactiplantibacillus plantarum (strain ATCC BAA-793 / NCIMB 8826 / WCFS1) (Lactobacillus plantarum).